The chain runs to 420 residues: MLSNLSKSLLSKGKFINKNNLLKNKRSFGTIVPGDKFEWNDPLSLESLLTEEEVMIRDQVNKFCQDELMPRIQMAYRDEKFDREIMREYGKMGMLGATIPAYGGVSHVAYGLMANAVEKVDSGYRSAMSVQSSLVMHPINTFGTDAQKSKYLDGLASGDLVGCFGLTEPNAGSDPAGMQTRAVKNSAGNYVLNGTKTWITNSPIADVFVVWAKVENGDIRGFVLEKGMKGLSAPKIEGKLSLRASITGMIVMEDVEVPPTAMFPEVKGLRGPFSCLNKARYGIGWGSLGAAEFCYSTARQYGLDRKQFGKPLAANQLYQKKLADMATEISLGLQACYQVGRLIDAGKATPERISLIKRNSCGKSLDIARQSRDMLGGNGIADEYHVIRHAANLETVNTYEGTHDIHALILGRAITGIPSF.

125–126 (RS) lines the substrate pocket. Residues 164 to 167 (FGLT), Ser-173, and 198 to 200 (WIT) each bind FAD. Residue Ser-173 coordinates substrate. Residues 273–277 (FSCLN) and Arg-280 each bind substrate. The active-site Proton acceptor is the Glu-400. The FAD site is built by Thr-402 and Phe-420.

The protein belongs to the acyl-CoA dehydrogenase family. FAD is required as a cofactor.

Its subcellular location is the mitochondrion matrix. It carries out the reaction glutaryl-CoA + oxidized [electron-transfer flavoprotein] + 2 H(+) = (2E)-butenoyl-CoA + reduced [electron-transfer flavoprotein] + CO2. It participates in amino-acid metabolism; lysine degradation. The protein operates within amino-acid metabolism; tryptophan metabolism. The sequence is that of Glutaryl-CoA dehydrogenase, mitochondrial (gcdh) from Dictyostelium discoideum (Social amoeba).